The primary structure comprises 237 residues: Phosphoribosylaminoimidazole-succinocarboxamide synthase (237 aa).

The protein belongs to the SAICAR synthetase family.

It carries out the reaction 5-amino-1-(5-phospho-D-ribosyl)imidazole-4-carboxylate + L-aspartate + ATP = (2S)-2-[5-amino-1-(5-phospho-beta-D-ribosyl)imidazole-4-carboxamido]succinate + ADP + phosphate + 2 H(+). Its pathway is purine metabolism; IMP biosynthesis via de novo pathway; 5-amino-1-(5-phospho-D-ribosyl)imidazole-4-carboxamide from 5-amino-1-(5-phospho-D-ribosyl)imidazole-4-carboxylate: step 1/2. The polypeptide is Phosphoribosylaminoimidazole-succinocarboxamide synthase (Methanosarcina mazei (strain ATCC BAA-159 / DSM 3647 / Goe1 / Go1 / JCM 11833 / OCM 88) (Methanosarcina frisia)).